We begin with the raw amino-acid sequence, 392 residues long: ATP phosphoribosyltransferase regulatory subunit (392 aa).

Belongs to the class-II aminoacyl-tRNA synthetase family. HisZ subfamily. As to quaternary structure, heteromultimer composed of HisG and HisZ subunits.

The protein localises to the cytoplasm. It participates in amino-acid biosynthesis; L-histidine biosynthesis; L-histidine from 5-phospho-alpha-D-ribose 1-diphosphate: step 1/9. In terms of biological role, required for the first step of histidine biosynthesis. May allow the feedback regulation of ATP phosphoribosyltransferase activity by histidine. This is ATP phosphoribosyltransferase regulatory subunit from Listeria monocytogenes serotype 4b (strain F2365).